The chain runs to 521 residues: Bifunctional purine biosynthesis protein PurH (521 aa).

The region spanning 1-149 (MSDPVIKRAL…KNNESVTVVT (149 aa)) is the MGS-like domain.

This sequence belongs to the PurH family.

It carries out the reaction (6R)-10-formyltetrahydrofolate + 5-amino-1-(5-phospho-beta-D-ribosyl)imidazole-4-carboxamide = 5-formamido-1-(5-phospho-D-ribosyl)imidazole-4-carboxamide + (6S)-5,6,7,8-tetrahydrofolate. The catalysed reaction is IMP + H2O = 5-formamido-1-(5-phospho-D-ribosyl)imidazole-4-carboxamide. Its pathway is purine metabolism; IMP biosynthesis via de novo pathway; 5-formamido-1-(5-phospho-D-ribosyl)imidazole-4-carboxamide from 5-amino-1-(5-phospho-D-ribosyl)imidazole-4-carboxamide (10-formyl THF route): step 1/1. The protein operates within purine metabolism; IMP biosynthesis via de novo pathway; IMP from 5-formamido-1-(5-phospho-D-ribosyl)imidazole-4-carboxamide: step 1/1. The sequence is that of Bifunctional purine biosynthesis protein PurH from Chlorobium phaeobacteroides (strain DSM 266 / SMG 266 / 2430).